A 442-amino-acid polypeptide reads, in one-letter code: Glycoprotein endo-alpha-1,2-mannosidase-like protein (442 aa).

At 1–8 (MNRLRRKA) the chain is on the cytoplasmic side. The helical; Signal-anchor for type II membrane protein transmembrane segment at 9–29 (CVALLLFTLFIFGTMMGLRTL) threads the bilayer. Topologically, residues 30 to 442 (KPTDGFSDLA…FSKEKEQWLM (413 aa)) are lumenal.

It belongs to the glycosyl hydrolase 99 family.

Its subcellular location is the golgi apparatus membrane. The chain is Glycoprotein endo-alpha-1,2-mannosidase-like protein (maneal) from Danio rerio (Zebrafish).